Reading from the N-terminus, the 391-residue chain is Argininosuccinate synthase (391 aa).

6–14 contributes to the ATP binding site; the sequence is AYSGGLDTT. Tyr-84 is a binding site for L-citrulline. An ATP-binding site is contributed by Gly-114. L-aspartate is bound by residues Thr-116, Asn-120, and Asp-121. Asn-120 provides a ligand contact to L-citrulline. L-citrulline is bound by residues Arg-124, Ser-171, Ser-180, Glu-253, and Tyr-265.

The protein belongs to the argininosuccinate synthase family. Type 1 subfamily. In terms of assembly, homotetramer.

It is found in the cytoplasm. It catalyses the reaction L-citrulline + L-aspartate + ATP = 2-(N(omega)-L-arginino)succinate + AMP + diphosphate + H(+). Its pathway is amino-acid biosynthesis; L-arginine biosynthesis; L-arginine from L-ornithine and carbamoyl phosphate: step 2/3. This Saccharolobus solfataricus (strain ATCC 35092 / DSM 1617 / JCM 11322 / P2) (Sulfolobus solfataricus) protein is Argininosuccinate synthase.